The chain runs to 351 residues: Phosphoribosylformylglycinamidine cyclo-ligase (351 aa).

It belongs to the AIR synthase family.

It is found in the cytoplasm. The catalysed reaction is 2-formamido-N(1)-(5-O-phospho-beta-D-ribosyl)acetamidine + ATP = 5-amino-1-(5-phospho-beta-D-ribosyl)imidazole + ADP + phosphate + H(+). It participates in purine metabolism; IMP biosynthesis via de novo pathway; 5-amino-1-(5-phospho-D-ribosyl)imidazole from N(2)-formyl-N(1)-(5-phospho-D-ribosyl)glycinamide: step 2/2. The sequence is that of Phosphoribosylformylglycinamidine cyclo-ligase from Burkholderia multivorans (strain ATCC 17616 / 249).